Reading from the N-terminus, the 341-residue chain is Methionine import ATP-binding protein MetN 2 (341 aa).

Positions 2–241 constitute an ABC transporter domain; it reads IELKEVVKEY…PQHTVTKRFV (240 aa). 38–45 contacts ATP; the sequence is GFSGAGKS.

It belongs to the ABC transporter superfamily. Methionine importer (TC 3.A.1.24) family. In terms of assembly, the complex is composed of two ATP-binding proteins (MetN), two transmembrane proteins (MetI) and a solute-binding protein (MetQ).

The protein localises to the cell membrane. It carries out the reaction L-methionine(out) + ATP + H2O = L-methionine(in) + ADP + phosphate + H(+). The enzyme catalyses D-methionine(out) + ATP + H2O = D-methionine(in) + ADP + phosphate + H(+). Part of the ABC transporter complex MetNIQ involved in methionine import. Responsible for energy coupling to the transport system. The chain is Methionine import ATP-binding protein MetN 2 from Staphylococcus aureus (strain bovine RF122 / ET3-1).